Consider the following 297-residue polypeptide: Flavin-dependent thymidylate synthase (297 aa).

The region spanning 41–251 (GFVRLVDYMG…PLTYAAFVEY (211 aa)) is the ThyX domain. FAD is bound by residues threonine 87, 110 to 112 (RHR), and glutamate 118. DUMP contacts are provided by residues 107 to 110 (QWVR), 118 to 122 (EYSAR), and arginine 190. The ThyX motif motif lies at 110–120 (RHRTANVNEYS). FAD is bound by residues 206 to 208 (DLH) and histidine 212. Arginine 217 is a binding site for dUMP. Catalysis depends on arginine 217, which acts as the Involved in ionization of N3 of dUMP, leading to its activation.

It belongs to the thymidylate synthase ThyX family. As to quaternary structure, homotetramer. Requires FAD as cofactor.

It catalyses the reaction dUMP + (6R)-5,10-methylene-5,6,7,8-tetrahydrofolate + NADPH + H(+) = dTMP + (6S)-5,6,7,8-tetrahydrofolate + NADP(+). It functions in the pathway pyrimidine metabolism; dTTP biosynthesis. In terms of biological role, catalyzes the reductive methylation of 2'-deoxyuridine-5'-monophosphate (dUMP) to 2'-deoxythymidine-5'-monophosphate (dTMP) while utilizing 5,10-methylenetetrahydrofolate (mTHF) as the methyl donor, and NADPH and FADH(2) as the reductant. This chain is Flavin-dependent thymidylate synthase, found in Ehrlichia ruminantium (strain Gardel).